A 123-amino-acid polypeptide reads, in one-letter code: Putative acidic leucine-rich nuclear phosphoprotein 32 family member C (123 aa).

LRR repeat units follow at residues 43-64 (ELEFLSTINVGLTFISNLPKLN), 65-87 (KLKKLELSENRISGDLEVLAEKC), 89-110 (NLKHLNLSGNKIKDLSTIELLK), and 114-123 (NLKSLDLFNC).

The protein belongs to the ANP32 family.

The polypeptide is Putative acidic leucine-rich nuclear phosphoprotein 32 family member C (Anp32c) (Mus musculus (Mouse)).